The chain runs to 314 residues: Inactive protein FRIGIDA (314 aa).

Over residues Met1–Pro18 the composition is skewed to low complexity. Residues Met1–Glu31 form a disordered region. Residues Val67–Asn97 adopt a coiled-coil conformation.

Belongs to the Frigida family.

It is found in the nucleus. The sequence is that of Inactive protein FRIGIDA (FRI) from Arabidopsis thaliana (Mouse-ear cress).